A 902-amino-acid chain; its full sequence is Methionine--tRNA ligase, cytoplasmic (902 aa).

The region spanning 74–212 (GWEQDDLTNQ…QKQPQPQPPP (139 aa)) is the GST C-terminal domain. Positions 275-285 (PYVNNVPHLGN) match the 'HIGH' region motif. Positions 595-599 (KFSKS) match the 'KMSKS' region motif. ATP is bound at residue K598. At S827 the chain carries Phosphoserine. T837 bears the Phosphothreonine mark. One can recognise a WHEP-TRS domain in the interval 843–899 (HIQTLTDEVTKQGNVVRELKAQKADKNQVAAEVAKLLDLKKQLALAEGKPIETPKGK).

This sequence belongs to the class-I aminoacyl-tRNA synthetase family. In terms of assembly, monomer. Part of a multisubunit complex that groups tRNA ligases for Arg (RARS1), Asp (DARS1), Gln (QARS1), Ile (IARS1), Leu (LARS1), Lys (KARS1), Met (MARS1) the bifunctional ligase for Glu and Pro (EPRS1) and the auxiliary subunits AIMP1/p43, AIMP2/p38 and EEF1E1/p18. Forms a linear complex that contains MARS1, EEF1E1, EPRS1 and AIMP2 that is at the core of the multisubunit complex.

It localises to the cytoplasm. Its subcellular location is the cytosol. The protein localises to the nucleus. The protein resides in the nucleolus. It carries out the reaction tRNA(Met) + L-methionine + ATP = L-methionyl-tRNA(Met) + AMP + diphosphate. Catalyzes the specific attachment of an amino acid to its cognate tRNA in a 2 step reaction: the amino acid (AA) is first activated by ATP to form AA-AMP and then transferred to the acceptor end of the tRNA. Plays a role in the synthesis of ribosomal RNA in the nucleolus. This chain is Methionine--tRNA ligase, cytoplasmic (Mars1), found in Mus musculus (Mouse).